The chain runs to 242 residues: Terpene cyclase cle7 (242 aa).

Helical transmembrane passes span 20 to 40 (LLLTLFSLSGTGWLINYITTI), 50 to 69 (GVSLVALTNNLAWELVFAIL), 79 to 101 (VILRSWLFVDIFVIYTTAKFARS), 117 to 137 (LFVLFGILGFFSGHWALSVLL), 143 to 163 (FYWSGMMCLVVMSGTALGILV), 172 to 192 (SYGMWFSRFVGSIFAVASLFL), and 207 to 227 (ILMRWFAGAFVVLDGLYGVCF).

This sequence belongs to the paxB family.

Its subcellular location is the membrane. It functions in the pathway secondary metabolite biosynthesis; terpenoid biosynthesis. Functionally, non-reducing polyketide synthase; part of the cluster A that mediates the biosynthesis of chevalone E and its oxidized derivatives that possess a unique five-membered lactone ring and can synergistically enhance the cytotoxicity of doxorubicin (DOX) in breast cancer cells. Within the pathway, cle7 takes part to the biosynthesis of the molecular scaffold by catalyzing the cyclization of the prenyl group initiated by protonation and ring-opening of the epoxide to produce the chevalone E intermediate. The molecular scaffold is commonly biosynthesized by a series of enzymes including the non-reducing polyketide synthase (NR-PKS) cle1 that produces the alpha-pyrone triacetic acid lactone (TAL); The membrane-bound prenyltransferase cle5 that accepts TAL as its substrate to perform a C-3 geranylgeranylation reaction, in which the pathway-dedicated GGPS cle6 is required to provide GGPP, the other substrate of cle5; the FAD-dependent monooxygenase Cle3 that forms an (S)-epoxide ring at the terminal olefin of the geranylgeranyl group; and the terpene cyclase Cle7 that catalyzes the cyclization of the prenyl group that yields the pentacyclic pathway intermediate chevalone E. Chevalone E can derivatize into seven new oxidized analogs by the cytochrome P450 monooxygenases cle2 (acting at C-20) and cle4 (acting at C-11 and C-12). The sequence is that of Terpene cyclase cle7 from Aspergillus versicolor.